The sequence spans 163 residues: Neurotrophin-3 (163 aa).

A signal peptide spans 1–3 (IQS). Residues 4–119 (TSMDQGILTE…VLNRTSRRKR (116 aa)) constitute a propeptide that is removed on maturation. N-linked (GlcNAc...) asparagine glycosylation occurs at Asn-112.

The protein belongs to the NGF-beta family.

The protein resides in the secreted. Its function is as follows. Seems to promote the survival of visceral and proprioceptive sensory neurons. In Eryx conicus (Rough-scaled sand boa), this protein is Neurotrophin-3 (NTF3).